The following is a 100-amino-acid chain: Defensin-6 (100 aa).

The signal sequence occupies residues 1–19 (MRTLTILTAVLLVALQAKA). A propeptide spanning residues 20 to 68 (EPLQAEDEPLQAKAYEADAQEQRGANDQDFAVSFAEDASSSLRALGSTR) is cleaved from the precursor. Cystine bridges form between C72–C99, C74–C88, and C78–C98.

It belongs to the alpha-defensin family. As to quaternary structure, homodimer. Self-assembles into higher-order oligomers termed nanonets, fibril-like structures that entrap microbes. Self-assembly into nanonets seems to protect against proteolytic digestion in duodenal fluid. Interacts with Y.enterocolitica invasin and S.typhimurium fliC/flagellim; the interaction creates an anchoring site for progressive DEFA6 self-assembly into nanonets. Post-translationally, proteolytically cleaved by trypsin at Arg-68; the propeptide is stored in the tissue of the small intestine and the mature peptide is found in the luminal fluid; cleavage may occur during or after release into the lumen. The N-terminal propeptide region suppresses self-assembly and renders DEFA6 propeptide unable to agglutinate bacteria and protect human epithelial cells from bacterial invasion. In terms of processing, under reducing conditions, naturally present in the gut owing to the low redox potential or enzymatically generated by the thioredoxin system, the disulfide bridges are opened leading to a conformational change of DEF6, thereby changing its antimicrobial spectrum. The reduced form exhibits inhibitory activity against anaerobic bacteria, in contrast to the minimal antimicrobial activity of the disulfide-linked oxidized form. The formation of higher-order nanonets and bacterial entrapment is independent of the redox state.

The protein resides in the secreted. It localises to the cytoplasmic vesicle. Its subcellular location is the secretory vesicle. In terms of biological role, host-defense peptide that contributes to intestinal innate immunity and mediates homeostasis at mucosal surfaces by forming higher-order oligomers that capture bacteria and prevent microbial invasion of the epithelium. After binding to bacterial surface proteins, undergoes ordered self-assembly to form fibril-like nanonets that surround and entangle bacteria and thereby prevent bacterial invasion across the epithelial barrier. Entangles and agglutinates Gram-negative bacteria, such as E.coli, S.typhimurium and Y.enterocolitica, and Gram-positive bacteria such as L.monocytogenes, thereby protecting the intestine against invasion by enteric bacterial pathogens. Blocks adhesion of C.albicans to intestinal epithelial cells and thereby suppresses fungal invasion of epithelial cells and biofilm formation. Under reducing conditions and in an acidic environment similar to the intestinal milieu, exhibits inhibitory activity against anaerobic bacteria such as B.adolescentis, L.acidophilus, and B.breve, as well as B.longum and S.thermophilus, possibly by leading to alterations in bacterial cell envelope structures. The disulfide-linked oxidized form exhibits negligible antimicrobial activity against Gram-negative and Gram-positive bacteria, as compared to the enteric defensin DEFA5. The sequence is that of Defensin-6 (DEFA6) from Pan troglodytes (Chimpanzee).